Reading from the N-terminus, the 92-residue chain is MARSLKKGPFVADHLLKKIEYLNARREKQVITTWSRGSTIVPIMIGHTIAVYNGREHLPIFVTDQMVGHKLGEFSPTRTFRGHVKSDKKSRR.

Belongs to the universal ribosomal protein uS19 family.

The protein localises to the plastid. It is found in the chloroplast. Functionally, protein S19 forms a complex with S13 that binds strongly to the 16S ribosomal RNA. In Chlorokybus atmophyticus (Soil alga), this protein is Small ribosomal subunit protein uS19c.